The primary structure comprises 111 residues: WAP four-disulfide core domain protein 12 (111 aa).

The N-terminal stretch at 1-23 (MGSSSFLVLMVSLTLVTLVAAEG) is a signal peptide. A WAP domain is found at 27–74 (GIEKAGVCPADNVRCFKSDPPQCHTDQDCLGERKCCYLHCGFKCVIPV). 4 disulfide bridges follow: Cys34-Cys62, Cys41-Cys66, Cys49-Cys61, and Cys55-Cys70. Residues 80-111 (GGNKDEDVSGPCPEPGWEAKSPGSSSTGCPQK) form a disordered region. Positions 101 to 111 (PGSSSTGCPQK) are enriched in polar residues.

The protein localises to the secreted. Functionally, antibacterial protein. Putative acid-stable proteinase inhibitor. This Chlorocebus aethiops (Green monkey) protein is WAP four-disulfide core domain protein 12 (WFDC12).